A 202-amino-acid chain; its full sequence is Transcription factor IBH1 (202 aa).

Residues 1–16 show a composition bias toward pro residues; sequence MDAKRTPPPPTPPNPN. A disordered region spans residues 1–33; sequence MDAKRTPPPPTPPNPNPSVIGSGAAADGGGFGR. One can recognise a bHLH domain in the interval 136-185; it reads TSAAARAVPPPPRQQGEPPRAEALRRLVPGGAGMEYSSLLEETADYLRSL.

Belongs to the bHLH protein family. Interacts with ILI1. Binds to ILI5/BUL1 and BC1. Interacts with BCL1 and BCL2. Highly expressed in roots and at lower levels in leaf blades, leaf sheaths, lamina joint, stems and panicles.

Its function is as follows. Atypical and probable non DNA-binding bHLH transcription factor that acts as a negative regulator of cell elongation and plant development. Binds the transcription factor ILI1 and forms a heterodimer of antagonistic bHLH transcription factors that function downstream of BZR1 to mediate brassinosteroid regulation of cell elongation and lamina inclination. The sequence is that of Transcription factor IBH1 from Oryza sativa subsp. japonica (Rice).